Here is a 146-residue protein sequence, read N- to C-terminus: D-aminoacyl-tRNA deacylase (146 aa).

The Gly-cisPro motif, important for rejection of L-amino acids motif lies at 138–139 (GP).

This sequence belongs to the DTD family. In terms of assembly, homodimer.

The protein localises to the cytoplasm. The enzyme catalyses glycyl-tRNA(Ala) + H2O = tRNA(Ala) + glycine + H(+). It catalyses the reaction a D-aminoacyl-tRNA + H2O = a tRNA + a D-alpha-amino acid + H(+). An aminoacyl-tRNA editing enzyme that deacylates mischarged D-aminoacyl-tRNAs. Also deacylates mischarged glycyl-tRNA(Ala), protecting cells against glycine mischarging by AlaRS. Acts via tRNA-based rather than protein-based catalysis; rejects L-amino acids rather than detecting D-amino acids in the active site. By recycling D-aminoacyl-tRNA to D-amino acids and free tRNA molecules, this enzyme counteracts the toxicity associated with the formation of D-aminoacyl-tRNA entities in vivo and helps enforce protein L-homochirality. This Stenotrophomonas maltophilia (strain K279a) protein is D-aminoacyl-tRNA deacylase.